The primary structure comprises 131 residues: Hydrogenase maturation factor HypA (131 aa).

Position 2 (His-2) interacts with Ni(2+). Zn(2+) is bound by residues Cys-74, Cys-77, Cys-91, and Cys-94.

Belongs to the HypA/HybF family.

Involved in the maturation of [NiFe] hydrogenases. Required for nickel insertion into the metal center of the hydrogenase. The protein is Hydrogenase maturation factor HypA of Streptomyces avermitilis (strain ATCC 31267 / DSM 46492 / JCM 5070 / NBRC 14893 / NCIMB 12804 / NRRL 8165 / MA-4680).